The sequence spans 640 residues: Probable potassium transport system protein Kup 1 (640 aa).

The next 12 membrane-spanning stretches (helical) occupy residues 25–45 (LVLA…LYAL), 65–85 (VVSL…VMVL), 115–135 (AVGW…DGVI), 153–173 (PALA…LFMI), 181–201 (VGAA…ALGL), 227–247 (GFAG…AEAL), 263–283 (WYGL…ALLL), 305–325 (MVAL…TAVF), 353–373 (IYLP…VLGF), 381–401 (AAFG…FAVL), 410–430 (WWAV…FWLA), and 438–458 (GGWL…CWFG).

This sequence belongs to the HAK/KUP transporter (TC 2.A.72) family.

Its subcellular location is the cell inner membrane. The catalysed reaction is K(+)(in) + H(+)(in) = K(+)(out) + H(+)(out). Functionally, transport of potassium into the cell. Likely operates as a K(+):H(+) symporter. In Chromobacterium violaceum (strain ATCC 12472 / DSM 30191 / JCM 1249 / CCUG 213 / NBRC 12614 / NCIMB 9131 / NCTC 9757 / MK), this protein is Probable potassium transport system protein Kup 1.